We begin with the raw amino-acid sequence, 259 residues long: Protein N-terminal and lysine N-methyltransferase efm7 (259 aa).

S-adenosyl-L-methionine-binding positions include tryptophan 53, 80-82 (GAA), aspartate 102, tryptophan 138, and alanine 164.

It belongs to the class I-like SAM-binding methyltransferase superfamily. EFM7 family.

It is found in the cytoplasm. Its function is as follows. S-adenosyl-L-methionine-dependent protein methyltransferase that trimethylates the N-terminal glycine 'Gly-2' of elongation factor 1-alpha, before also catalyzing the mono- and dimethylation of 'Lys-3'. The protein is Protein N-terminal and lysine N-methyltransferase efm7 of Emericella nidulans (strain FGSC A4 / ATCC 38163 / CBS 112.46 / NRRL 194 / M139) (Aspergillus nidulans).